The following is a 427-amino-acid chain: MFVDIAKIYVKAGDGGDGIVAFRREKYVPAGGPAGGDGGKGGDVIFVADRELNTLLDFKYKRHYKAQNGERGGPNNMHGKDGEDLIIKVPVGTVIKDAETGEIIADLSREGDRAIVAHGGRGGRGNAHFATATRQVPRFAEVGEKGDELWVILELKVLADVGLIGYPNVGKSTFLSVATNARPEIANYPFTTKYPNLGIVYISEGESFVLADIPGLIEGASEGAGLGHQFLRHVERTKVLIHIVDVSGSEGREPVEDFIKINEELKKYSPELAQKPQIVAANKMDLPDAQAYFELFKEEIEKMGYEVYPISAATGMGIREVLKRAYELLKQQKAAENIEEDAKPRTFVYYKKKDVKPLTVRKENGVYVVEGTVVEKVARNIVLNDHDSFRYFQNFLNKLGVFDKLREMGIQDGDIVRILDVEFEYYE.

The Obg domain occupies 1–158 (MFVDIAKIYV…LWVILELKVL (158 aa)). Residues 159–330 (ADVGLIGYPN…VLKRAYELLK (172 aa)) enclose the OBG-type G domain. Residues 165-172 (GYPNVGKS), 190-194 (FTTKY), 212-215 (DIPG), 282-285 (NKMD), and 311-313 (SAA) each bind GTP. Mg(2+)-binding residues include Ser172 and Thr192. One can recognise an OCT domain in the interval 347–427 (FVYYKKKDVK…ILDVEFEYYE (81 aa)).

This sequence belongs to the TRAFAC class OBG-HflX-like GTPase superfamily. OBG GTPase family. As to quaternary structure, monomer. It depends on Mg(2+) as a cofactor.

Its subcellular location is the cytoplasm. An essential GTPase which binds GTP, GDP and possibly (p)ppGpp with moderate affinity, with high nucleotide exchange rates and a fairly low GTP hydrolysis rate. Plays a role in control of the cell cycle, stress response, ribosome biogenesis and in those bacteria that undergo differentiation, in morphogenesis control. This is GTPase Obg from Caldicellulosiruptor saccharolyticus (strain ATCC 43494 / DSM 8903 / Tp8T 6331).